A 107-amino-acid polypeptide reads, in one-letter code: Acidic phospholipase A2 braziliase-I (107 aa).

Disulfide bonds link C26–C100, C28–C44, C43–C86, C49–C107, C50–C79, C57–C72, and C66–C77. The Ca(2+) site is built by Y27, G29, and G31. H47 is a catalytic residue. Residue D48 coordinates Ca(2+). D80 is a catalytic residue.

Monomer. Ca(2+) serves as cofactor. In terms of tissue distribution, expressed by the venom gland.

Its subcellular location is the secreted. It carries out the reaction a 1,2-diacyl-sn-glycero-3-phosphocholine + H2O = a 1-acyl-sn-glycero-3-phosphocholine + a fatty acid + H(+). Snake venom phospholipase A2 (PLA2) that induces significant edematogenic activity. Shows mild cytotoxicity on Trypanosoma cruzi and Leishmania infantum. Also inhibits ADP- and collagen-induced platelet aggregation. Does not show myotoxic activity. The protein is Acidic phospholipase A2 braziliase-I of Bothrops brazili (Brazil's lancehead).